We begin with the raw amino-acid sequence, 335 residues long: MTSSAIRINKKPVVLSGIQPSSGMLHLGNYLGALKSFGRMQDDYTTYFMLANLHSMTFPQNPEVLRENTIRIAAQCIAAGIDPAKSIVFLQSDVYQHNQLAWVLGNVCTFGEAARMTQFKDKSGKQGNISTGLFTYPILMASDILLYDSAFVPVGADQKQHLELTRTLARRFNAQYGQTFLVPQPFECSIRIYDLQDPAVKMSKSSATESGTIFLLDSPDKIVKKIMRSVTDSEDVIGYDRETKPGVSNLVVMYSCLTDCTIEQTVNIYSGKKYSVLKKDLSDILVEVCTTIATRTNELLDDKNYIRKILVTASEQARGVAQKTIDRVYEKLGVY.

Residues 19–21 and 28–29 each bind ATP; these read QPS and GN. A 'HIGH' region motif is present at residues 20–29; the sequence is PSSGMLHLGN. D143 contributes to the L-tryptophan binding site. Residues 155 to 157, I192, and 201 to 205 contribute to the ATP site; these read GAD and KMSKS. A 'KMSKS' region motif is present at residues 201–205; sequence KMSKS.

This sequence belongs to the class-I aminoacyl-tRNA synthetase family. In terms of assembly, homodimer.

The protein resides in the cytoplasm. It catalyses the reaction tRNA(Trp) + L-tryptophan + ATP = L-tryptophyl-tRNA(Trp) + AMP + diphosphate + H(+). Its function is as follows. Catalyzes the attachment of tryptophan to tRNA(Trp). The sequence is that of Tryptophan--tRNA ligase from Tropheryma whipplei (strain TW08/27) (Whipple's bacillus).